A 326-amino-acid polypeptide reads, in one-letter code: Tagatose 1,6-diphosphate aldolase (326 aa).

This sequence belongs to the aldolase LacD family.

It carries out the reaction D-tagatofuranose 1,6-bisphosphate = D-glyceraldehyde 3-phosphate + dihydroxyacetone phosphate. It participates in carbohydrate metabolism; D-tagatose 6-phosphate degradation; D-glyceraldehyde 3-phosphate and glycerone phosphate from D-tagatose 6-phosphate: step 2/2. The protein is Tagatose 1,6-diphosphate aldolase of Staphylococcus aureus (strain bovine RF122 / ET3-1).